The following is a 248-amino-acid chain: NADP-dependent 3-hydroxy acid dehydrogenase YdfG (248 aa).

Residues 7-12 (GATAGF), 32-33 (RR), 54-55 (DV), and N81 each bind NADP(+). S134 contributes to the substrate binding site. NADP(+) contacts are provided by residues Y147, K151, and 177–185 (PGLVGGTEF). Catalysis depends on Y147, which acts as the Proton acceptor.

It belongs to the short-chain dehydrogenases/reductases (SDR) family. In terms of assembly, homotetramer.

The enzyme catalyses 3-hydroxypropanoate + NADP(+) = 3-oxopropanoate + NADPH + H(+). It carries out the reaction L-allo-threonine + NADP(+) = aminoacetone + CO2 + NADPH. NADP-dependent dehydrogenase with broad substrate specificity acting on 3-hydroxy acids. Catalyzes the NADP-dependent oxidation of L-allo-threonine to L-2-amino-3-keto-butyrate, which is spontaneously decarboxylated into aminoacetone. Also acts on D-threonine, L-serine, D-serine, D-3-hydroxyisobutyrate, L-3-hydroxyisobutyrate, D-glycerate and L-glycerate. Able to catalyze the reduction of the malonic semialdehyde to 3-hydroxypropionic acid. YdfG is apparently supplementing RutE, the presumed malonic semialdehyde reductase involved in pyrimidine degradation since both are able to detoxify malonic semialdehyde. This Escherichia coli O157:H7 protein is NADP-dependent 3-hydroxy acid dehydrogenase YdfG.